The sequence spans 712 residues: MARQTPITRYRNIGISAHIDAGKTTTTERILFYTGVSHKIGEVHDGAATMDWMEQEQERGITITSAATTCFWSGMGNQFPQYRINVIDTPGHVDFTIEVERSMRVLDGACMVYCAVGGVQPQSETVWRQANKYKVPRLAFVNKMDRTGANFFRVVEQMKTRLGANPVPIVVPIGAEDTFTGVVDLIEMKAIIWDEASQGMKFEYGEIPADLVDTAQEWRTNMVEAAAEASEELMDKYLEEGDLSKEDIIAGLRARTLASEIQVMLCGSAFKNKGVQRMLDAVIEFLPSPTEVKAIEGILDDKDETKASREASDEAPFSALAFKIMNDKFVGNLTFVRVYSGVLKQGDAVYNPVKSKRERIGRIVQMHANERQDIDEIRAGDIAACVGLKDVTTGDTLCDEKNIITLERMEFPDPVIQLAVEPKTKADQEKMSIALGRLAKEDPSFRVHTDEESGQTIIAGMGELHLDIIVDRMKREFGVEANIGKPMVAYRETIKKTVEQEGKFVRQTGGKGKFGHVYVRLEPLDVEAAGKEYEFAEEVVGGVVPKEFFGAVDKGIQERMKNGVLAGYPVVGVKAVLFDGSYHDVDSDELSFKMAGSYAFRDGFMKADPVLLEPIMKVEVETPEDYMGDIMGDLNRRRGMVQGMDDLPGGTKAIKAEVPLAEMFGYATQMRSMSQGRATYSMEFAKYAETPRNVAEGIIAKFQAGGKKGDDE.

The tr-type G domain maps to 8 to 290; that stretch reads TRYRNIGISA…AVIEFLPSPT (283 aa). GTP-binding positions include 17–24, 88–92, and 142–145; these read AHIDAGKT, DTPGH, and NKMD.

The protein belongs to the TRAFAC class translation factor GTPase superfamily. Classic translation factor GTPase family. EF-G/EF-2 subfamily.

The protein resides in the cytoplasm. Functionally, catalyzes the GTP-dependent ribosomal translocation step during translation elongation. During this step, the ribosome changes from the pre-translocational (PRE) to the post-translocational (POST) state as the newly formed A-site-bound peptidyl-tRNA and P-site-bound deacylated tRNA move to the P and E sites, respectively. Catalyzes the coordinated movement of the two tRNA molecules, the mRNA and conformational changes in the ribosome. This chain is Elongation factor G, found in Acinetobacter baumannii (strain SDF).